The following is a 165-amino-acid chain: 5-formyltetrahydrofolate cyclo-ligase (165 aa).

Position 4–8 (4–8 (KNSLR)) interacts with ATP. Ile51 and Glu56 together coordinate substrate. Position 116–124 (116–124 (RIGFGKGYY)) interacts with ATP. Residue Asp125 coordinates Mg(2+). Residues Arg126 and Trp154 each coordinate ATP. Asp155 provides a ligand contact to Mg(2+).

It belongs to the 5-formyltetrahydrofolate cyclo-ligase family. Monomer or homodimer. Mg(2+) is required as a cofactor.

Its subcellular location is the cytoplasm. It catalyses the reaction (6S)-5-formyl-5,6,7,8-tetrahydrofolate + ATP = (6R)-5,10-methenyltetrahydrofolate + ADP + phosphate. Involved in folate metabolism. Catalyzes the irreversible conversion of 5-formyltetrahydrofolate (5-FTHF) to yield 5,10-methenyltetrahydrofolate. The protein is 5-formyltetrahydrofolate cyclo-ligase of Mycoplasma genitalium (strain ATCC 33530 / DSM 19775 / NCTC 10195 / G37) (Mycoplasmoides genitalium).